We begin with the raw amino-acid sequence, 429 residues long: Histidine--tRNA ligase (429 aa).

It belongs to the class-II aminoacyl-tRNA synthetase family. As to quaternary structure, homodimer.

It localises to the cytoplasm. The enzyme catalyses tRNA(His) + L-histidine + ATP = L-histidyl-tRNA(His) + AMP + diphosphate + H(+). This Streptococcus pneumoniae serotype 4 (strain ATCC BAA-334 / TIGR4) protein is Histidine--tRNA ligase.